The chain runs to 231 residues: MTMHEFFENFGIKINDSKIFSTALTHNSYANETKTKETYQRLEFLGDAVLQMYVSKFLYLNFTNAPEGKLTKTRSDIVRQETLSEIAKMIDLGKIIRLGQGEIKSKGYEKPSILSDVYEAVTAAIYLDQTEEVLISWIKSTIFKYIEKNDYKELNHDYKSELQEIIQAEIRSDLEYRVESQKHIEKDNKIEYTVSVNLDGKKYGIGTGFSKQEASQNAAKDCLNKLKKSAK.

The RNase III domain occupies 3–130; the sequence is MHEFFENFGI…VTAAIYLDQT (128 aa). Glu43 lines the Mg(2+) pocket. The active site involves Asp47. Mg(2+)-binding residues include Asp116 and Glu119. Residue Glu119 is part of the active site. Residues 157 to 228 form the DRBM domain; the sequence is DYKSELQEII…AKDCLNKLKK (72 aa).

Belongs to the ribonuclease III family. Homodimer. Requires Mg(2+) as cofactor.

The protein localises to the cytoplasm. It catalyses the reaction Endonucleolytic cleavage to 5'-phosphomonoester.. Its function is as follows. Digests double-stranded RNA. Involved in the processing of primary rRNA transcript to yield the immediate precursors to the large and small rRNAs (23S and 16S). Processes some mRNAs, and tRNAs when they are encoded in the rRNA operon. Processes pre-crRNA and tracrRNA of type II CRISPR loci if present in the organism. In Mesoplasma florum (strain ATCC 33453 / NBRC 100688 / NCTC 11704 / L1) (Acholeplasma florum), this protein is Ribonuclease 3.